Reading from the N-terminus, the 395-residue chain is Subtilisin-like protease 5 (395 aa).

Positions 1–19 (MGFLTVLYLSLAALSVTNA) are cleaved as a signal peptide. Residues 20 to 115 (AQIMSAPNGA…VEPDAIISQH (96 aa)) constitute a propeptide that is removed on maturation. The Inhibitor I9 domain maps to 36–112 (YIVVMKDDTS…VAFVEPDAII (77 aa)). The region spanning 124-395 (PWGLSRLSNR…RRLLYNGSGR (272 aa)) is the Peptidase S8 domain. Active-site charge relay system residues include Asp155 and His186. N-linked (GlcNAc...) asparagine glycans are attached at residues Asn229 and Asn247. Ser341 serves as the catalytic Charge relay system. The disordered stretch occupies residues 374 to 395 (QPTIHNPGPDTTRRLLYNGSGR). An N-linked (GlcNAc...) asparagine glycan is attached at Asn391.

Belongs to the peptidase S8 family.

The protein resides in the secreted. Its function is as follows. Secreted subtilisin-like serine protease with keratinolytic activity that contributes to pathogenicity. The protein is Subtilisin-like protease 5 (SUB5) of Arthroderma otae (strain ATCC MYA-4605 / CBS 113480) (Microsporum canis).